We begin with the raw amino-acid sequence, 510 residues long: Flavonoid 3',5'-hydroxylase (510 aa).

Residue C447 coordinates heme.

It belongs to the cytochrome P450 family. Heme serves as cofactor.

It carries out the reaction a 3',5'-unsubstituted flavanone + 2 reduced [NADPH--hemoprotein reductase] + 2 O2 = a 3',5'-dihydroxyflavanone + 2 oxidized [NADPH--hemoprotein reductase] + 2 H2O + 2 H(+). It functions in the pathway pigment biosynthesis; anthocyanin biosynthesis. Catalyzes the 3'5'-hydroxylation of naringenin and eriodictyol to form 5,7,3,'4',5'-pentahydroxyflavanone and 3',5'-hydroxylation of dihydrokaempferol and dihydroquercetin to form dihydromyricetin. The protein is Flavonoid 3',5'-hydroxylase (CYP75A5) of Eustoma exaltatum subsp. russellianum (Bluebells).